The following is a 473-amino-acid chain: Vasculin (473 aa).

3 disordered regions span residues 1 to 25, 46 to 149, and 191 to 342; these read MAQHDFAPAWLNFPTPPSSTKSSLN, RHNS…REPN, and VGNL…QERD. Phosphoserine is present on Ser49. At Arg87 the chain carries Omega-N-methylarginine. The span at 119 to 133 shows a compositional bias: basic and acidic residues; sequence ETGRKEDKRERKQFE. 2 stretches are compositionally biased toward polar residues: residues 194 to 204 and 251 to 286; these read LPSQPVKNGTG and AFKSTAKNFSPSTNSVKECNRSNSSSPVDKLNQQPR. Ser274, Ser276, Ser322, and Ser381 each carry phosphoserine. Residues 293-329 show a composition bias toward basic and acidic residues; that stretch reads MRTDKKSEFLKALKRDRVEEEHEDESRAGSEKDDDSF. Positions 444 to 473 are disordered; the sequence is GPWKNSTFKPTTENDDTETSSSDTSDDDDV. The segment covering 456–473 has biased composition (acidic residues); sequence ENDDTETSSSDTSDDDDV.

Belongs to the vasculin family. Interacts with GTF2B, GTF2F2, RNA polymerase II and TBP. As to expression, widely expressed. Some isoforms may be specifically expressed in veins and arteries (at protein level). Isoform 4 is widely expressed. Isoform 1, isoform 2 and isoform 3 may be specifically expressed in vascular smooth muscle cells.

The protein localises to the nucleus. It is found in the cytoplasm. In terms of biological role, functions as a GC-rich promoter-specific transactivating transcription factor. The protein is Vasculin (GPBP1) of Homo sapiens (Human).